A 1367-amino-acid polypeptide reads, in one-letter code: Flocculation protein FLO11 (1367 aa).

The first 21 residues, 1-21 (MQRPFLLAYLVLSLLFNSALG), serve as a signal peptide directing secretion. The 177-residue stretch at 31–207 (SSEGTSCNSI…NIDCDNNCGG (177 aa)) folds into the Flo11 domain. 3 cysteine pairs are disulfide-bonded: Cys37–Cys201, Cys44–Cys179, and Cys141–Cys205. Over residues 209-267 (KSSTTTSSTSESSTTTSSTSESSTTTSSTSESSTTTSSTSESSTSSSTTAPATPTTTSC) the composition is skewed to low complexity. 2 disordered regions span residues 209–975 (KSST…TTSV) and 1008–1032 (TTTV…PTTP). Repeat copies occupy residues 210-219 (SSTTTSSTSE), 220-229 (SSTTTSSTSE), 230-239 (SSTTTSSTSE), 240-249 (SSTTTSSTSE), 262-274 (PTTT…KPTP), 275-287 (PTTT…KPTP), 313-327 (PVPT…SSSA), 328-342 (PVPT…SSSA), 343-354 (PVTSSTTESSSA), 355-369 (PVPT…SSSA), 370-381 (PVTSSTTESSSA), 382-393 (PVTSSTTESSSA), 394-408 (PVPT…SSSA), 409-420 (PVTSSTTESSSA), 421-432 (PVTSSTTESSSA), 433-444 (PVTSSTTESSSA), 445-456 (PVTSSTTESSSA), 457-471 (PVPT…SSSA), 472-483 (PVTSSTTESSSA), 484-498 (PVPT…SSSA), 499-510 (PVTSSTTESSSA), 511-525 (PVPT…SSSA), 526-540 (PAPT…SSSA), 541-552 (PVTSSTTESSSA), 568-579 (PVTSSTTESSSA), 580-594 (PVPT…SSSA), 595-609 (PVPT…SSSA), 610-624 (PAPT…SSSA), 625-636 (PVTSSTTESSSA), 637-651 (PVPT…SSSA), 652-666 (PVPT…SSSA), 667-681 (PVPT…SSSA), 682-693 (PVTSSTTESSSA), 694-705 (PVTSSTTESSSA), 706-720 (PVPT…SSSA), 721-735 (PVPT…SSSA), 736-750 (PVPT…SSSA), 751-762 (PVTSSTTESSSA), 763-777 (PVPT…SSSA), 778-792 (PVPT…SSSA), 808-822 (PVPT…TSSA), 838-852 (PVPT…SSSA), 865-879 (PVPT…TSSA), 937-968 (TTIT…TTVP), and 981-1012 (TTIT…TTVP). Residues 210–249 (SSTTTSSTSESSTTTSSTSESSTTTSSTSESSTTTSSTSE) are 4 X 10 AA repeats, Ser/Thr-rich. The segment at 262 to 287 (PTTTSCTKEKPTPPTTTSCTKEKPTP) is 2 X 13 AA repeats, Thr-rich. The span at 281–292 (TKEKPTPPHHDT) shows a compositional bias: basic and acidic residues. Composition is skewed to low complexity over residues 302–900 (TSKT…TVTP) and 910–948 (TETS…STGT). The tract at residues 313–852 (PVPTPSSSTT…SSSTTESSSA (540 aa)) is 22 X 15 AA approximate repeats, Ser-rich. The interval 343–762 (PVTSSTTESS…TSSTTESSSA (420 aa)) is 15 X 12 AA repeats, Ser/Thr-rich. Asn817 carries an N-linked (GlcNAc...) asparagine glycan. N-linked (GlcNAc...) asparagine glycosylation occurs at Asn874. Residues 937–1119 (TTITTTVCST…SPKTVTTTVP (183 aa)) are 3 X 32 AA tandem repeats, Thr-rich. Over residues 949 to 961 (NSAGETTSGCSPK) the composition is skewed to polar residues. Low complexity predominate over residues 962–975 (TVTTTVPTTTTTSV). The segment covering 1014–1032 (STSPSETASESTTTSPTTP) has biased composition (low complexity). Residues 1088-1119 (TTITTTVCSTGTNSAGETTSGCSPKTVTTTVP) form a 5-3 repeat. Gly1346 is lipidated: GPI-anchor amidated glycine. Positions 1347–1367 (AANIKVLGNFMWLLLALPVVF) are cleaved as a propeptide — removed in mature form.

It belongs to the flocculin family. Highly divergent. Post-translationally, extensively O-mannosylated. In terms of processing, the GPI-anchor is attached to the protein in the endoplasmic reticulum and serves to target the protein to the cell surface. There, the glucosamine-inositol phospholipid moiety is cleaved off and the GPI-modified mannoprotein is covalently attached via its lipidless GPI glycan remnant to the 1,6-beta-glucan of the outer cell wall layer. A soluble form is probably produced by proteolytic cleavage at the cell surface (shedding).

Its subcellular location is the secreted. The protein localises to the cell wall. It localises to the membrane. Homophilic binding protein that enables kin discrimination in heterogeneous yeast populations by mediating homotypic cell-cell interactions during flocculation, a reversible and asexual process in which cells adhere to form aggregates (flocs). Plays a role in cell-substrate adhesion, haploid invasive growth, diploid pseudohyphae formation and biofilm (flor) development. Adhesive activity is inhibited by mannose, but not by glucose, maltose, sucrose or galactose. The chain is Flocculation protein FLO11 from Saccharomyces cerevisiae (strain ATCC 204508 / S288c) (Baker's yeast).